A 288-amino-acid polypeptide reads, in one-letter code: N-glycosylase/DNA lyase (288 aa).

Gln-35, Ser-62, and Trp-73 together coordinate 8-oxoguanine. Residues 134-203 (NPLVLVERPS…VACASISSEM (70 aa)) form a helix-hairpin-helix region. Lys-160 serves as the catalytic Schiff-base intermediate with DNA. Positions 164 and 189 each coordinate 8-oxoguanine. Residue Asp-191 is part of the active site. 8-oxoguanine-binding residues include Asp-238 and Trp-242.

Belongs to the archaeal N-glycosylase/DNA lyase (AGOG) family.

It carries out the reaction 2'-deoxyribonucleotide-(2'-deoxyribose 5'-phosphate)-2'-deoxyribonucleotide-DNA = a 3'-end 2'-deoxyribonucleotide-(2,3-dehydro-2,3-deoxyribose 5'-phosphate)-DNA + a 5'-end 5'-phospho-2'-deoxyribonucleoside-DNA + H(+). Its function is as follows. DNA repair enzyme that is part of the base excision repair (BER) pathway; protects from oxidative damage by removing the major product of DNA oxidation, 8-oxoguanine (GO), from single- and double-stranded DNA substrates. This Aeropyrum pernix (strain ATCC 700893 / DSM 11879 / JCM 9820 / NBRC 100138 / K1) protein is N-glycosylase/DNA lyase.